A 329-amino-acid polypeptide reads, in one-letter code: Probable ABC transporter permease protein MG188 homolog (329 aa).

A run of 6 helical transmembrane segments spans residues 30–50 (FLLF…PFFL), 96–116 (IISL…IVFV), 128–148 (VFFL…IYIL), 176–196 (ALWG…VLVI), 234–254 (LIFL…ISLF), and 283–303 (NFAG…GLVL). The region spanning 88–303 (LRNSFLYSII…ILGVCYGLVL (216 aa)) is the ABC transmembrane type-1 domain.

The protein belongs to the binding-protein-dependent transport system permease family. MalFG subfamily.

It is found in the cell membrane. In terms of biological role, probably part of a binding-protein-dependent transport system. Probably responsible for the translocation of the substrate across the membrane. The sequence is that of Probable ABC transporter permease protein MG188 homolog from Mycoplasma pneumoniae (strain ATCC 29342 / M129 / Subtype 1) (Mycoplasmoides pneumoniae).